The following is a 207-amino-acid chain: MKLRATFVFKTTLVALSFALFALFLVSCTENVKEIKSESVINELFPNLWVFLAHLLAFVILLFLLLFLFWKPTQKFLNQRKALLEEQVNQANSLEQQAQALLQQANQRHENSLVVAKEIVDQANYEALQLKSEIEKKANRQANLMIFQARQEIEKEKRLIQEQSLKESVELAMLAAKELIIKKVDVKADKAFIEEFIRELEAEDDHD.

An N-terminal signal peptide occupies residues 1–27; the sequence is MKLRATFVFKTTLVALSFALFALFLVS. Cys-28 is lipidated: N-palmitoyl cysteine. Cys-28 carries the S-diacylglycerol cysteine lipid modification. Residues 49–69 traverse the membrane as a helical segment; sequence WVFLAHLLAFVILLFLLLFLF.

This sequence belongs to the ATPase B chain family. In terms of assembly, F-type ATPases have 2 components, F(1) - the catalytic core - and F(0) - the membrane proton channel. F(1) has five subunits: alpha(3), beta(3), gamma(1), delta(1), epsilon(1). F(0) has three main subunits: a(1), b(2) and c(10-14). The alpha and beta chains form an alternating ring which encloses part of the gamma chain. F(1) is attached to F(0) by a central stalk formed by the gamma and epsilon chains, while a peripheral stalk is formed by the delta and b chains.

It is found in the cell membrane. Its function is as follows. F(1)F(0) ATP synthase produces ATP from ADP in the presence of a proton or sodium gradient. F-type ATPases consist of two structural domains, F(1) containing the extramembraneous catalytic core and F(0) containing the membrane proton channel, linked together by a central stalk and a peripheral stalk. During catalysis, ATP synthesis in the catalytic domain of F(1) is coupled via a rotary mechanism of the central stalk subunits to proton translocation. Functionally, component of the F(0) channel, it forms part of the peripheral stalk, linking F(1) to F(0). This is ATP synthase subunit b from Mycoplasma pneumoniae (strain ATCC 29342 / M129 / Subtype 1) (Mycoplasmoides pneumoniae).